The sequence spans 792 residues: Probable G-protein coupled receptor 156 (792 aa).

The Extracellular portion of the chain corresponds to 1–49 (MEPEINCSEFCDSFPGQELDRRPLHDLCKTTITDSQHGSADISPLSPAL). Residue N6 is glycosylated (N-linked (GlcNAc...) asparagine). A helical transmembrane segment spans residues 50 to 70 (LGVIWTFLSCGLLLVLFFLAF). Over 71–86 (TIRCRKNRIVKMSSPN) the chain is Cytoplasmic. A helical membrane pass occupies residues 87–107 (LNIVTLLGSCLTYSSAYLFGI). Over 108 to 118 (QDALVGSSVEA) the chain is Extracellular. Residues 119–139 (LIQTRLSLLCIGTTLVFGPIL) form a helical membrane-spanning segment. At 140-164 (GKSWRLYKVFTQRVPDKRVIIKDLQ) the chain is on the cytoplasmic side. A helical transmembrane segment spans residues 165–185 (LLGLVAALVVADVILLVTWVL). The Extracellular portion of the chain corresponds to 186–222 (TDPIQCLQILGVSMKVTGRDVSCSLTNTHFCASRYSD). A helical transmembrane segment spans residues 223–243 (VWIALVLGCKGLLLLYGAYLA). At 244–257 (GLTNHVSSPPVNQS) the chain is on the cytoplasmic side. The chain crosses the membrane as a helical span at residues 258–278 (LTIMVGVNLLLLTAGLLFVVT). Residues 279–287 (RYLHSWPNL) are Extracellular-facing. A helical transmembrane segment spans residues 288–308 (VFGLTSGGIFVCTTTVNCCVF). Residues 309–792 (LPQLRQRKAF…FKDDLKPTLV (484 aa)) are Cytoplasmic-facing. A coiled-coil region spans residues 354–390 (EXSCMERLLTEKNAVIESLQEQVSNAKEKLVKLMSAE). 3 disordered regions span residues 407 to 457 (GGPA…KYDM), 469 to 516 (GCSQ…EVLP), and 538 to 704 (DLGT…QRQP). Positions 422–434 (AAAEDSLPASAAS) are enriched in low complexity. Composition is skewed to basic and acidic residues over residues 443 to 457 (SRRDXSPSPDQKYDM) and 474 to 486 (PKAEQSEGPERGN). The segment covering 554–567 (PWKSNTSGSPQKLS) has biased composition (polar residues). Positions 578 to 589 (VRRRRAAQRARS) are enriched in basic residues. Residues 602–619 (QANNTVSGSQNGLIVQNR) are compositionally biased toward polar residues. Over residues 620 to 635 (DSPRLDHHNARSKEPR) the composition is skewed to basic and acidic residues. Residues 675–704 (PRQPSASAPAQSSTAPCLSSXPALPRQRQP) are compositionally biased toward low complexity.

It belongs to the G-protein coupled receptor 3 family. GABA-B receptor subfamily. As to expression, widely expressed throughout the brain and is particularly dense in the olfactory tubercles, islands of Calleja, nucleus accumbens, piriform cortex and all fields of the hippocampus.

The protein resides in the cell membrane. Functionally, orphan G-protein coupled receptor involved in the regulation of hair cell orientation in mechanosensory organs of the inner ear. It is required to trigger a 180 degree reversal in hair cell orientation, creating a virtual line of polarity reversal (LPR) across which stereociliary bundles are arranged in opposite orientations. The protein is Probable G-protein coupled receptor 156 (Gpr156) of Rattus norvegicus (Rat).